A 251-amino-acid chain; its full sequence is Haloacid dehalogenase-like hydrolase domain-containing protein 3 (251 aa).

K15 carries the post-translational modification N6-acetyllysine; alternate. At K15 the chain carries N6-succinyllysine; alternate. K130 is subject to N6-acetyllysine.

It belongs to the HAD-like hydrolase superfamily.

The chain is Haloacid dehalogenase-like hydrolase domain-containing protein 3 (HDHD3) from Bos taurus (Bovine).